A 1562-amino-acid chain; its full sequence is Cell wall protein RBR3 (1562 aa).

A signal peptide spans 1-20 (MIIFRKSFFTFWLLLNSVLA). Residue asparagine 190 is glycosylated (N-linked (GlcNAc...) asparagine). Residues 338–353 (APGTNPTEYTTTITTT) are compositionally biased toward low complexity. Positions 338 to 366 (APGTNPTEYTTTITTTNSAGKPLTETGVV) are disordered. A glycan (N-linked (GlcNAc...) asparagine) is linked at asparagine 373. 2 stretches are compositionally biased toward low complexity: residues 383–415 (FPTS…SQPS) and 422–729 (SSSK…ISAT). Disordered regions lie at residues 383-729 (FPTS…ISAT), 1404-1424 (GSGS…SSSN), and 1455-1486 (YSSG…GNSN). Asparagine 602, asparagine 679, and asparagine 705 each carry an N-linked (GlcNAc...) asparagine glycan. A compositionally biased stretch (gly residues) spans 1407–1419 (SDSGSGSGSGSGS). Over residues 1468-1486 (GANNVGSNQTPTVSGGNSN) the composition is skewed to polar residues. A lipid anchor (GPI-anchor amidated asparagine) is attached at asparagine 1538. Residues 1539–1562 (SGSKFSVGKSAFIAIILTTFIGFI) constitute a propeptide, removed in mature form.

The protein belongs to the HYR1/IFF family. In terms of processing, the GPI-anchor is attached to the protein in the endoplasmic reticulum and serves to target the protein to the cell surface. There, the glucosamine-inositol phospholipid moiety is cleaved off and the GPI-modified mannoprotein is covalently attached via its lipidless GPI glycan remnant to the 1,6-beta-glucan of the outer cell wall layer.

The protein localises to the secreted. It localises to the cell wall. The protein resides in the membrane. GPI-anchored cell wall protein involved in cell wall organization, hyphal growth, as well as in host-fungal interaction and virulence. This is Cell wall protein RBR3 (RBR3) from Candida albicans (strain SC5314 / ATCC MYA-2876) (Yeast).